The primary structure comprises 471 residues: Putative F-box protein At5g36200 (471 aa).

One can recognise an F-box domain in the interval Met-1–Leu-46.

The polypeptide is Putative F-box protein At5g36200 (Arabidopsis thaliana (Mouse-ear cress)).